Reading from the N-terminus, the 1892-residue chain is Protein TIC 214 (1892 aa).

The next 6 membrane-spanning stretches (helical) occupy residues 12 to 32 (LISLYMTIINSVVMVGLYYGF), 68 to 88 (FIAGQLMMFISIYYVPLHLAL), 89 to 109 (GKPHTITVLALPYLLFHFFWN), 128 to 148 (LSIQCVFLNNLIIQLFNHFIL), 176 to 196 (VGWLIGHILLMKWVGLVLVWI), and 225 to 245 (IFSILLFITCVYYLGRIPSPI). Acidic residues predominate over residues 256-266 (PEEVGESEEER). Positions 256 to 299 (PEEVGESEEERNIEIETISEGGGANQKQGTEENTSSSLFSEEEV) are disordered. Over residues 280–294 (NQKQGTEENTSSSLF) the composition is skewed to polar residues. The helical transmembrane segment at 1115-1135 (FYFFINFFIEKIYMDILLYII) threads the bilayer. The disordered stretch occupies residues 1613–1636 (SNQEKDVEEDYDKSDKKKRRKKKQ).

The protein belongs to the TIC214 family. In terms of assembly, part of the Tic complex.

It localises to the plastid. It is found in the chloroplast inner membrane. Functionally, involved in protein precursor import into chloroplasts. May be part of an intermediate translocation complex acting as a protein-conducting channel at the inner envelope. The protein is Protein TIC 214 of Gossypium hirsutum (Upland cotton).